An 85-amino-acid polypeptide reads, in one-letter code: Omega-conotoxin-like Am6.5 (85 aa).

Positions 1–19 (MCILIVAVLFLTAWTFVMA) are cleaved as a signal peptide. Residues 20–53 (DDPRDEPDTVVRGGKLFSRARDEMNPAASKLNER) constitute a propeptide that is removed on maturation. 3 disulfide bridges follow: C55/C73, C62/C77, and C72/C81. The residue at position 84 (Q84) is a Glutamine amide.

Belongs to the conotoxin O1 family. Post-translationally, is not hydroxylated. Expressed by the venom duct.

Its subcellular location is the secreted. Its function is as follows. Omega-conotoxins act at presynaptic membranes, they bind and block voltage-gated calcium channels (Cav). This chain is Omega-conotoxin-like Am6.5, found in Conus amadis (Amadis cone).